The following is a 243-amino-acid chain: Ribonuclease PH (243 aa).

Phosphate-binding positions include arginine 91 and 129-131 (GTR).

Belongs to the RNase PH family. Homohexameric ring arranged as a trimer of dimers.

The catalysed reaction is tRNA(n+1) + phosphate = tRNA(n) + a ribonucleoside 5'-diphosphate. Phosphorolytic 3'-5' exoribonuclease that plays an important role in tRNA 3'-end maturation. Removes nucleotide residues following the 3'-CCA terminus of tRNAs; can also add nucleotides to the ends of RNA molecules by using nucleoside diphosphates as substrates, but this may not be physiologically important. Probably plays a role in initiation of 16S rRNA degradation (leading to ribosome degradation) during starvation. The polypeptide is Ribonuclease PH (Burkholderia pseudomallei (strain 668)).